The chain runs to 201 residues: Putative 3-methyladenine DNA glycosylase (201 aa).

This sequence belongs to the DNA glycosylase MPG family.

The chain is Putative 3-methyladenine DNA glycosylase from Trichodesmium erythraeum (strain IMS101).